Reading from the N-terminus, the 894-residue chain is CWF19-like protein 2 (894 aa).

The segment at 1–147 is disordered; sequence MATSMAAASG…DEKSGKDDTQ (147 aa). Residues 13–56 are compositionally biased toward basic and acidic residues; sequence ESAKSIEERKEQTRNARAEVLRQAKANFEKEERRKELKRLRGED. Residues 13-107 adopt a coiled-coil conformation; the sequence is ESAKSIEERK…KKQKYEKNNE (95 aa). Residue Ser-75 is modified to Phosphoserine. Positions 76–99 are enriched in basic residues; the sequence is VKKKKKKDKHSKKAKKEKKKKSKK. A compositionally biased stretch (basic and acidic residues) spans 128–147; sequence PDKEKAWKVKDEKSGKDDTQ. Residues 166–281 adopt a coiled-coil conformation; it reads SSSSLKAEKE…AEKAASTKED (116 aa). Residue Lys-171 forms a Glycyl lysine isopeptide (Lys-Gly) (interchain with G-Cter in SUMO2) linkage. The segment covering 270–284 has biased composition (basic and acidic residues); that stretch reads EDAEKAASTKEDYRR. Positions 270–483 are disordered; the sequence is EDAEKAASTK…STFAGSPERE (214 aa). The segment covering 320 to 330 has biased composition (polar residues); the sequence is TTDTAKNSNNE. Residues 332–352 are compositionally biased toward basic and acidic residues; that stretch reads FIGDEKDKRPGSLETCRRESN. A phosphoserine mark is found at Ser-360 and Ser-372. 2 stretches are compositionally biased toward basic and acidic residues: residues 410–430 and 440–473; these read KNSE…DKKH and TDEH…RDTK. Residues Ser-479 and Ser-484 each carry the phosphoserine modification. The stretch at 502 to 530 forms a coiled coil; the sequence is KAEMMGNMELAEQLKVQLEKANKFKETIT. Residues 561-583 form a disordered region; the sequence is NTPGKSLESQGGRRKRQMVSTHE. A Glycyl lysine isopeptide (Lys-Gly) (interchain with G-Cter in SUMO2) cross-link involves residue Lys-604. Residues 644-675 are a coiled coil; that stretch reads AAERERLGEEEENQRKKAIAEHRSLAAQMEKC.

The protein belongs to the CWF19 family.

This chain is CWF19-like protein 2 (CWF19L2), found in Homo sapiens (Human).